The primary structure comprises 311 residues: Manganese-dependent inorganic pyrophosphatase (311 aa).

Residues histidine 10, aspartate 14, aspartate 16, aspartate 75, histidine 97, and aspartate 149 each coordinate Mn(2+).

It belongs to the PPase class C family. Homodimer. The cofactor is Mn(2+).

It catalyses the reaction diphosphate + H2O = 2 phosphate + H(+). The sequence is that of Manganese-dependent inorganic pyrophosphatase (ppaC) from Methanothrix thermoacetophila (strain DSM 6194 / JCM 14653 / NBRC 101360 / PT) (Methanosaeta thermophila).